A 464-amino-acid polypeptide reads, in one-letter code: ATP synthase subunit beta (464 aa).

Residue 153–160 (GGAGVGKT) participates in ATP binding.

The protein belongs to the ATPase alpha/beta chains family. F-type ATPases have 2 components, CF(1) - the catalytic core - and CF(0) - the membrane proton channel. CF(1) has five subunits: alpha(3), beta(3), gamma(1), delta(1), epsilon(1). CF(0) has three main subunits: a(1), b(2) and c(9-12). The alpha and beta chains form an alternating ring which encloses part of the gamma chain. CF(1) is attached to CF(0) by a central stalk formed by the gamma and epsilon chains, while a peripheral stalk is formed by the delta and b chains.

The protein localises to the cell membrane. It catalyses the reaction ATP + H2O + 4 H(+)(in) = ADP + phosphate + 5 H(+)(out). Functionally, produces ATP from ADP in the presence of a proton gradient across the membrane. The catalytic sites are hosted primarily by the beta subunits. The protein is ATP synthase subunit beta of Acetivibrio thermocellus (strain ATCC 27405 / DSM 1237 / JCM 9322 / NBRC 103400 / NCIMB 10682 / NRRL B-4536 / VPI 7372) (Clostridium thermocellum).